Reading from the N-terminus, the 439-residue chain is Methionine aminopeptidase 2-2 (439 aa).

Residues M1–N90 are disordered. Positions E28–A41 are enriched in acidic residues. Residues K56–G72 show a composition bias toward basic residues. H196 is a binding site for substrate. A divalent metal cation-binding residues include D216, D227, and H296. H304 lines the substrate pocket. A divalent metal cation-binding residues include E329 and E424.

It belongs to the peptidase M24A family. Methionine aminopeptidase eukaryotic type 2 subfamily. The cofactor is Co(2+). Requires Zn(2+) as cofactor. Mn(2+) serves as cofactor. Fe(2+) is required as a cofactor.

It is found in the cytoplasm. It catalyses the reaction Release of N-terminal amino acids, preferentially methionine, from peptides and arylamides.. Functionally, cotranslationally removes the N-terminal methionine from nascent proteins. The N-terminal methionine is often cleaved when the second residue in the primary sequence is small and uncharged (Met-Ala-, Cys, Gly, Pro, Ser, Thr, or Val). The protein is Methionine aminopeptidase 2-2 of Penicillium rubens (strain ATCC 28089 / DSM 1075 / NRRL 1951 / Wisconsin 54-1255) (Penicillium chrysogenum).